We begin with the raw amino-acid sequence, 192 residues long: Probable nicotinate-nucleotide adenylyltransferase (192 aa).

The protein belongs to the NadD family.

The enzyme catalyses nicotinate beta-D-ribonucleotide + ATP + H(+) = deamido-NAD(+) + diphosphate. Its pathway is cofactor biosynthesis; NAD(+) biosynthesis; deamido-NAD(+) from nicotinate D-ribonucleotide: step 1/1. Catalyzes the reversible adenylation of nicotinate mononucleotide (NaMN) to nicotinic acid adenine dinucleotide (NaAD). In Bradyrhizobium sp. (strain ORS 278), this protein is Probable nicotinate-nucleotide adenylyltransferase.